The following is a 331-amino-acid chain: 6-phosphogluconolactonase (331 aa).

This sequence belongs to the cycloisomerase 2 family.

The catalysed reaction is 6-phospho-D-glucono-1,5-lactone + H2O = 6-phospho-D-gluconate + H(+). The protein operates within carbohydrate degradation; pentose phosphate pathway; D-ribulose 5-phosphate from D-glucose 6-phosphate (oxidative stage): step 2/3. In terms of biological role, catalyzes the hydrolysis of 6-phosphogluconolactone to 6-phosphogluconate. This is 6-phosphogluconolactonase from Salmonella paratyphi B (strain ATCC BAA-1250 / SPB7).